Consider the following 319-residue polypeptide: NADH-quinone oxidoreductase subunit H 1 (319 aa).

Transmembrane regions (helical) follow at residues 1–21, 74–94, 107–127, 147–167, 179–199, 238–258, 262–282, and 293–313; these read MIGLIITATISVTLIMVLLVV, FAYILAPAVAATPVLAGFGVI, VGVLFLIGMLGLTAYAVVLGA, LAYEVFLGLSLMGAVMLAGSL, VWFVVLQPLGAALFCIAGVAA, VLLVSALAVTLFFGGWLGPWL, IWFGLKTGVIAVVFVWLRATL, and FAWKIALPLSLANLLLTGIVV.

This sequence belongs to the complex I subunit 1 family. In terms of assembly, NDH-1 is composed of 14 different subunits. Subunits NuoA, H, J, K, L, M, N constitute the membrane sector of the complex.

It localises to the cell inner membrane. It carries out the reaction a quinone + NADH + 5 H(+)(in) = a quinol + NAD(+) + 4 H(+)(out). In terms of biological role, NDH-1 shuttles electrons from NADH, via FMN and iron-sulfur (Fe-S) centers, to quinones in the respiratory chain. The immediate electron acceptor for the enzyme in this species is believed to be ubiquinone. Couples the redox reaction to proton translocation (for every two electrons transferred, four hydrogen ions are translocated across the cytoplasmic membrane), and thus conserves the redox energy in a proton gradient. This subunit may bind ubiquinone. This Rhodopseudomonas palustris (strain BisB5) protein is NADH-quinone oxidoreductase subunit H 1.